A 177-amino-acid chain; its full sequence is Large ribosomal subunit protein uL6 (177 aa).

It belongs to the universal ribosomal protein uL6 family. Part of the 50S ribosomal subunit.

Its function is as follows. This protein binds to the 23S rRNA, and is important in its secondary structure. It is located near the subunit interface in the base of the L7/L12 stalk, and near the tRNA binding site of the peptidyltransferase center. The polypeptide is Large ribosomal subunit protein uL6 (Micrococcus luteus (strain ATCC 4698 / DSM 20030 / JCM 1464 / CCM 169 / CCUG 5858 / IAM 1056 / NBRC 3333 / NCIMB 9278 / NCTC 2665 / VKM Ac-2230) (Micrococcus lysodeikticus)).